Reading from the N-terminus, the 211-residue chain is FMN-dependent NADH:quinone oxidoreductase 3 (211 aa).

102–105 (MWNF) contacts FMN.

The protein belongs to the azoreductase type 1 family. In terms of assembly, homodimer. The cofactor is FMN.

It carries out the reaction 2 a quinone + NADH + H(+) = 2 a 1,4-benzosemiquinone + NAD(+). The catalysed reaction is N,N-dimethyl-1,4-phenylenediamine + anthranilate + 2 NAD(+) = 2-(4-dimethylaminophenyl)diazenylbenzoate + 2 NADH + 2 H(+). Quinone reductase that provides resistance to thiol-specific stress caused by electrophilic quinones. Functionally, also exhibits azoreductase activity. Catalyzes the reductive cleavage of the azo bond in aromatic azo compounds to the corresponding amines. The chain is FMN-dependent NADH:quinone oxidoreductase 3 from Bacillus anthracis.